The following is a 480-amino-acid chain: Probable WRKY transcription factor 61 (480 aa).

The interval 30–108 (NQLMAKHNEP…RNYDDNEKSS (79 aa)) is disordered. Basic and acidic residues-rich tracts occupy residues 57-66 (REKVNEREEL) and 84-106 (NKEEKNKDVEEAEGDRNYDDNEK). Residues 185–251 (CETPTMNDGC…YEGTHNHPLP (67 aa)) constitute a DNA-binding region (WRKY).

The protein localises to the nucleus. In terms of biological role, transcription factor. Interacts specifically with the W box (5'-(T)TGAC[CT]-3'), a frequently occurring elicitor-responsive cis-acting element. The chain is Probable WRKY transcription factor 61 (WRKY61) from Arabidopsis thaliana (Mouse-ear cress).